Reading from the N-terminus, the 893-residue chain is AP-4 complex accessory subunit RUSC1 (893 aa).

4 disordered regions span residues 31-223, 237-332, 339-358, and 366-444; these read ELRE…GKAE, EKTE…KDRS, SPDT…APPR, and LRSR…RAHA. Residues 77 to 87 show a composition bias toward polar residues; sequence HGSSIENQQDP. 2 stretches are compositionally biased toward low complexity: residues 95 to 117 and 149 to 165; these read SPSD…DESP and PSTC…DSCS. Positions 177 to 187 are enriched in polar residues; sequence SNCNALTTCQD. A compositionally biased stretch (basic and acidic residues) spans 237 to 257; sequence EKTEAGWKTIEDSDSGRKTDE. 2 stretches are compositionally biased toward pro residues: residues 373-382 and 390-399; these read QPPPVPPRDP and PPRPPPPPVP. Residues 463 to 598 are interaction with TRAF6; the sequence is MAEAQSGTGQ…FHAFILGLLN (136 aa). One can recognise an RUN domain in the interval 515-659; the sequence is DVGHLVLTTL…LTFHLDLLFE (145 aa). The interaction with IKBKG stretch occupies residues 599–665; that stretch reads TKQLELWFSS…LLFEHHHHLP (67 aa). Disordered regions lie at residues 700-721 and 751-772; these read RGTS…PAGS and HGTT…TPGR. Low complexity-rich tracts occupy residues 702 to 714 and 754 to 770; these read TSGE…STPS and TAEA…QTTP. The region spanning 835 to 893 is the SH3 domain; the sequence is QADRAVRALCDHTAAGPDQLSFQRGELLRVIATVDEDWLRCGRDGVEGLVPVGYTSLVL.

In terms of assembly, associated component of the adapter-like complex 4 (AP-4). Interacts with IKBKG and TRAF6. Interacts with F-actin, acetylated actin, TUBB3, STX1A, KIF5B and KLC1. Phosphorylated on serine residues following nuclear translocation. In terms of processing, polyubiquitinated; polyubiquitination involves TRAF6. Expressed in brain, brain stem and spinal cord (at protein level).

Its subcellular location is the cytoplasm. The protein resides in the nucleus. It localises to the cytoskeleton. The protein localises to the cytoplasmic vesicle. It is found in the early endosome. Its subcellular location is the postsynaptic density. The protein resides in the golgi apparatus. Functionally, associates with the adapter-like complex 4 (AP-4) and may therefore play a role in vesicular trafficking of proteins at the trans-Golgi network. Signaling adapter which plays a role in neuronal differentiation. Involved in regulation of NGF-dependent neurite outgrowth. May play a role in neuronal vesicular trafficking, specifically involving pre-synaptic membrane proteins. Seems to be involved in signaling pathways that are regulated by the prolonged activation of MAPK. Can regulate the polyubiquitination of IKBKG and thus may be involved in regulation of the NF-kappa-B pathway. This is AP-4 complex accessory subunit RUSC1 from Mus musculus (Mouse).